Reading from the N-terminus, the 286-residue chain is 2-dehydro-3-deoxyphosphooctonate aldolase (286 aa).

Belongs to the KdsA family.

Its subcellular location is the cytoplasm. It carries out the reaction D-arabinose 5-phosphate + phosphoenolpyruvate + H2O = 3-deoxy-alpha-D-manno-2-octulosonate-8-phosphate + phosphate. The protein operates within carbohydrate biosynthesis; 3-deoxy-D-manno-octulosonate biosynthesis; 3-deoxy-D-manno-octulosonate from D-ribulose 5-phosphate: step 2/3. It participates in bacterial outer membrane biogenesis; lipopolysaccharide biosynthesis. The chain is 2-dehydro-3-deoxyphosphooctonate aldolase from Haemophilus ducreyi (strain 35000HP / ATCC 700724).